Consider the following 387-residue polypeptide: Chorismate synthase (387 aa).

Residues arginine 39 and arginine 45 each coordinate NADP(+). Residues arginine 130–serine 132, asparagine 251–alanine 252, glycine 295, lysine 310–threonine 314, and arginine 336 each bind FMN.

It belongs to the chorismate synthase family. Homotetramer. The cofactor is FMNH2.

The catalysed reaction is 5-O-(1-carboxyvinyl)-3-phosphoshikimate = chorismate + phosphate. Its pathway is metabolic intermediate biosynthesis; chorismate biosynthesis; chorismate from D-erythrose 4-phosphate and phosphoenolpyruvate: step 7/7. Catalyzes the anti-1,4-elimination of the C-3 phosphate and the C-6 proR hydrogen from 5-enolpyruvylshikimate-3-phosphate (EPSP) to yield chorismate, which is the branch point compound that serves as the starting substrate for the three terminal pathways of aromatic amino acid biosynthesis. This reaction introduces a second double bond into the aromatic ring system. In Exiguobacterium sp. (strain ATCC BAA-1283 / AT1b), this protein is Chorismate synthase.